A 544-amino-acid polypeptide reads, in one-letter code: Chaperonin GroEL (544 aa).

ATP contacts are provided by residues 30–33 (TLGP), Lys-51, 87–91 (DGTTT), Gly-415, and Asp-495.

The protein belongs to the chaperonin (HSP60) family. Forms a cylinder of 14 subunits composed of two heptameric rings stacked back-to-back. Interacts with the co-chaperonin GroES.

The protein resides in the cytoplasm. It carries out the reaction ATP + H2O + a folded polypeptide = ADP + phosphate + an unfolded polypeptide.. In terms of biological role, together with its co-chaperonin GroES, plays an essential role in assisting protein folding. The GroEL-GroES system forms a nano-cage that allows encapsulation of the non-native substrate proteins and provides a physical environment optimized to promote and accelerate protein folding. This chain is Chaperonin GroEL, found in Aeromonas salmonicida.